The sequence spans 627 residues: Hemocyanin D chain (627 aa).

His-171, His-175, His-202, His-322, His-326, and His-362 together coordinate Cu cation. Asn-445 is a glycosylation site (N-linked (GlcNAc...) asparagine). The cysteines at positions 531 and 579 are disulfide-linked.

Belongs to the tyrosinase family. Hemocyanin subfamily. As to quaternary structure, tarantula hemocyanin is a 24-chain polymer with seven different chains identified. In terms of tissue distribution, hemolymph.

The protein localises to the secreted. The protein resides in the extracellular space. Its function is as follows. Hemocyanins are copper-containing oxygen carriers occurring freely dissolved in the hemolymph of many mollusks and arthropods. This is Hemocyanin D chain (HCD) from Aphonopelma sp. (American tarantula).